The following is a 481-amino-acid chain: MPGFQSLRLDVLSPVDHSFPDYNPCYYLYFRSPSASDVRTSLQRGLEKLIKILPFITGEVVPCDGDRMEKRNGLLCIKYTASPDESLPIIEFREDMSLSVENISTSKTRTGLEDVHLAKTLAPLPLTPNPSRPSYVVRFRATTVRDGVVLAMSFSHFVFDATGAGHLMEHFAECVREPEPKPCDIDQETLRQALWHINGDTGVIPNEPGDCHSLPAFMLPPGGREAIPEMAAPGMRVCRWKISAAKVELLKNTCNDLLRSLDYKAGDNSVNFLSSQDVLTGLLTTCLKHDPKGKVEGSDIGVAVNLRNRLSPEWPTGYFGNMAKYAIAPGLAEPTAEELAVAHRLVAENPKILPAASDIARLYRNACSIRHTISQISDVHIRGFVSWLNSCKDLGPLTTPFPFINFTSWRHLNLYELDFGGALGYVDDIQTHGMMPTLGIILPRAKAVQGTEAHWDVLFYVKNEDYPAVMKQGLLRFLTVD.

Belongs to the fumigaclavine B O-acetyltransferase family. As to quaternary structure, monomer.

It participates in secondary metabolite biosynthesis; terpenoid biosynthesis. Its function is as follows. O-acetyltransferase; part of the gene cluster that mediates the biosynthesis of anditomin, a fungal meroterpenoid. The first step of the pathway is the synthesis of 3,5-dimethylorsellinic acid (DMOA) by the polyketide synthase andM. DMOA is then converted to the phthalide compound 5,7-dihydroxy-4,6-dimethylphthalide (DHDMP) by the cytochrome P450 monooxygenase andK, which is further prenylated by the prenyltransferase andD to yield farnesyl-DHDMP. Further epoxidation by the FAD-dependent monooxygenase andE leads to epoxyfarnesyl-DHDMP. The next step involves the terpene cyclase andB that converts epoxyfarnesyl-DHDMP into preandiloid A through opening of the epoxide ring followed by the cyclization of the farnesyl moiety. Preandiloid A is in turn oxidized at the C-3 hydroxyl group to yield preandiloid B by the dehydrogenase andC. The dioxygenase andA is solely responsible for the dehydrogenation of preandiloid B leading to the enone preandiloid C, as well as for the intriguing structural rearrangement to generate the bicyclo[2.2.2]octane core, transforming preandiloid C into andiconin. FAD-binding monooxygenase andJ then produces andilesin D which is reduced by dehydrogenase andI to yield andilesin A. Action of acetyltransferase andG followed by a spontaneous acetate elimination leads then to andilesin B, which is in turn substrate of the short chain dehydrogenase andH to yield andilesin C. Finally, the dioxygenase andF catalyzes the transformation of andilesin C to anditomin. The sequence is that of O-acetyltransferase andG from Emericella variicolor (Aspergillus stellatus).